A 126-amino-acid polypeptide reads, in one-letter code: Glycine cleavage system H protein (126 aa).

The 83-residue stretch at 21–103 (TVTVGISDHA…YESGWIARIK (83 aa)) folds into the Lipoyl-binding domain. An N6-lipoyllysine modification is found at K62.

The protein belongs to the GcvH family. As to quaternary structure, the glycine cleavage system is composed of four proteins: P, T, L and H. Requires (R)-lipoate as cofactor.

In terms of biological role, the glycine cleavage system catalyzes the degradation of glycine. The H protein shuttles the methylamine group of glycine from the P protein to the T protein. In Aliivibrio fischeri (strain ATCC 700601 / ES114) (Vibrio fischeri), this protein is Glycine cleavage system H protein.